The primary structure comprises 187 residues: Orotate phosphoribosyltransferase (187 aa).

5-phospho-alpha-D-ribose 1-diphosphate is bound by residues R99, K100, K103, H105, and 125-133 (DDVITTGGS). Residues T129 and R157 each coordinate orotate.

The protein belongs to the purine/pyrimidine phosphoribosyltransferase family. PyrE subfamily. Homodimer. It depends on Mg(2+) as a cofactor.

The enzyme catalyses orotidine 5'-phosphate + diphosphate = orotate + 5-phospho-alpha-D-ribose 1-diphosphate. The protein operates within pyrimidine metabolism; UMP biosynthesis via de novo pathway; UMP from orotate: step 1/2. Catalyzes the transfer of a ribosyl phosphate group from 5-phosphoribose 1-diphosphate to orotate, leading to the formation of orotidine monophosphate (OMP). The protein is Orotate phosphoribosyltransferase of Leptospira borgpetersenii serovar Hardjo-bovis (strain JB197).